Here is a 266-residue protein sequence, read N- to C-terminus: Small ribosomal subunit protein uS2 (266 aa).

Residues 247–266 (EGENNYSNNRSWNKPERTNN) form a disordered region. The span at 249 to 258 (ENNYSNNRSW) shows a compositional bias: polar residues.

Belongs to the universal ribosomal protein uS2 family.

This is Small ribosomal subunit protein uS2 from Mesoplasma florum (strain ATCC 33453 / NBRC 100688 / NCTC 11704 / L1) (Acholeplasma florum).